The sequence spans 2522 residues: Neurogenic locus notch homolog protein 1 (2522 aa).

A signal peptide spans 1–19; the sequence is MYRIGLLVLIWSLLGLAQG. 4 EGF-like domains span residues 20–57, 58–99, 102–140, and 141–177; these read LRCT…ERCQ, YPNP…KVCL, VDNA…DSCQ, and QADP…ATCK. Topologically, residues 20–1730 are extracellular; sequence LRCTQTAEMC…ETAKPPPPLY (1711 aa). Intrachain disulfides connect Cys22/Cys35, Cys29/Cys45, Cys47/Cys56, Cys62/Cys74, Cys68/Cys87, Cys89/Cys98, Cys106/Cys117, Cys111/Cys128, Cys130/Cys139, Cys145/Cys156, Cys150/Cys165, Cys167/Cys176, Cys183/Cys194, Cys188/Cys203, Cys205/Cys214, Cys221/Cys232, Cys226/Cys242, Cys244/Cys253, Cys260/Cys271, Cys265/Cys280, Cys282/Cys291, Cys298/Cys311, Cys305/Cys320, Cys322/Cys331, Cys338/Cys349, Cys343/Cys358, Cys360/Cys369, Cys375/Cys386, Cys380/Cys397, Cys399/Cys408, Cys415/Cys428, Cys422/Cys437, and Cys439/Cys448. Positions 179-215 constitute an EGF-like 5; calcium-binding domain; it reads DINECSQNPCRNGGQCLNEFGSYRCNCQNRFTGRNCE. The region spanning 217-254 is the EGF-like 6 domain; the sequence is PYVPCNPSPCLNGGTCRQTDDTSYECTCLPGFSGQNCE. O-linked (Fuc...) threonine; alternate glycosylation is present at Thr231. An O-linked (GalNAc...) threonine; alternate glycan is attached at Thr231. The 37-residue stretch at 256 to 292 folds into the EGF-like 7; calcium-binding domain; it reads NIDDCPSNNCRNGGTCVDGVNTYNCQCPPDWTGQYCT. The EGF-like 8; calcium-binding domain maps to 294 to 332; the sequence is DVDECQLMPNACQNGGTCHNTYGGYNCVCVNGWTGEDCS. The EGF-like 9; calcium-binding domain occupies 334–370; sequence NIDDCANAACHSGATCHDRVASFFCECPHGRTGLLCH. The region spanning 371-409 is the EGF-like 10 domain; the sequence is LDNACISNPCNEGSNCDTNPVNGKAICTCPPGYTGPACN. The region spanning 411–449 is the EGF-like 11; calcium-binding domain; the sequence is DVDECSLGANPCEHGGRCTNTLGSFQCNCPQGYAGPRCE. Ca(2+)-binding residues include Thr431 and Ser434. The O-linked (Glc...) serine glycan is linked to Ser434. Positions 451, 452, and 454 each coordinate Ca(2+). One can recognise an EGF-like 12; calcium-binding domain in the interval 451–487; sequence DVNECLSNPCQNDATCLDQIGEFQCICMPGYEGLYCE. Intrachain disulfides connect Cys455/Cys466, Cys460/Cys475, and Cys477/Cys486. Ser457 carries O-linked (Glc...) serine glycosylation. Thr465 is a glycosylation site (O-linked (Fuc...) threonine). Ca(2+) contacts are provided by Asp468 and Gln469. Asn489, Ile490, and Glu492 together coordinate Ca(2+). Positions 489–525 constitute an EGF-like 13; calcium-binding domain; sequence NIDECASNPCLHNGKCVDKINEFHCECPTGFNGNLCQ. 75 disulfides stabilise this stretch: Cys493/Cys504, Cys498/Cys513, Cys515/Cys524, Cys531/Cys542, Cys536/Cys551, Cys553/Cys562, Cys569/Cys579, Cys574/Cys588, Cys590/Cys599, Cys606/Cys617, Cys611/Cys626, Cys628/Cys637, Cys644/Cys654, Cys649/Cys663, Cys665/Cys674, Cys681/Cys692, Cys686/Cys701, Cys703/Cys712, Cys719/Cys729, Cys724/Cys738, Cys740/Cys749, Cys756/Cys767, Cys761/Cys776, Cys778/Cys787, Cys794/Cys805, Cys799/Cys814, Cys816/Cys825, Cys832/Cys843, Cys837/Cys854, Cys856/Cys865, Cys872/Cys883, Cys877/Cys892, Cys894/Cys903, Cys910/Cys921, Cys915/Cys930, Cys932/Cys941, Cys948/Cys959, Cys953/Cys968, Cys970/Cys979, Cys986/Cys997, Cys991/Cys1006, Cys1008/Cys1017, Cys1024/Cys1035, Cys1029/Cys1044, Cys1046/Cys1055, Cys1062/Cys1073, Cys1067/Cys1082, Cys1084/Cys1093, Cys1100/Cys1121, Cys1115/Cys1130, Cys1132/Cys1141, Cys1148/Cys1159, Cys1153/Cys1168, Cys1170/Cys1179, Cys1186/Cys1197, Cys1191/Cys1206, Cys1208/Cys1217, Cys1224/Cys1243, Cys1237/Cys1252, Cys1254/Cys1263, Cys1270/Cys1283, Cys1275/Cys1292, Cys1294/Cys1303, Cys1310/Cys1321, Cys1315/Cys1333, Cys1335/Cys1344, Cys1351/Cys1362, Cys1356/Cys1371, Cys1373/Cys1382, Cys1390/Cys1401, Cys1395/Cys1412, Cys1414/Cys1423, Cys1447/Cys1470, Cys1452/Cys1465, and Cys1461/Cys1477. The O-linked (Glc...) serine glycan is linked to Ser495. Ca(2+) is bound by residues Asp506 and Lys507. In terms of domain architecture, EGF-like 14; calcium-binding spans 527 to 563; sequence DVDECASTPCKNGAKCLDGPNSYTCQCTEGFTGRHCE. An EGF-like 15; calcium-binding domain is found at 565–600; it reads DINECIPDPCHYGTCKDGIATFTCLCRPGYTGRLCD. In terms of domain architecture, EGF-like 16; calcium-binding spans 602–638; sequence DINECLSQPCQNGGQCTDRENGYICTCPKGTTGVNCE. In terms of domain architecture, EGF-like 17; calcium-binding spans 640 to 675; that stretch reads NLDDCASNPCDYGKCIDKIDGYECTCEPGYTGKMCN. An EGF-like 18; calcium-binding domain is found at 677–713; sequence NIDECASNPCRNGGTCKDKINGFTCVCPDGYHDHMCL. The EGF-like 19; calcium-binding domain maps to 715–750; the sequence is EVNECNSNPCIHGTCHDGINGYKCDCDAGWSGSNCD. Residues 752-788 enclose the EGF-like 20; calcium-binding domain; sequence NNNECESNPCMNGGTCKDMTGAYICTCRAGFSGPNCQ. The region spanning 790–826 is the EGF-like 21; calcium-binding domain; the sequence is NINECASNPCLNRGTCIDDVAGYKCNCMLPYTGAICE. Positions 828–866 constitute an EGF-like 22 domain; that stretch reads VLAPCSGSPCKNGGRCKESEDYETFSCECPPGWQGQTCE. In terms of domain architecture, EGF-like 23; calcium-binding spans 868–904; that stretch reads DMNECVNRPCRNGAMCQNTNGSYKCNCKPGYAGRHCE. A glycan (N-linked (GlcNAc...) asparagine) is linked at Asn887. In terms of domain architecture, EGF-like 24; calcium-binding spans 906–942; it reads DIDDCQPNPCHNGGSCSDGINMFFCNCPAGFRGPKCE. Residues 944-980 enclose the EGF-like 25; calcium-binding domain; it reads DINECASNPCKNGANCTDCVNSYTCTCQPGFSGIHCE. Asn958 is a glycosylation site (N-linked (GlcNAc...) asparagine). In terms of domain architecture, EGF-like 26 spans 982 to 1018; sequence NTPDCTESSCFNGGTCIDGINTFSCQCPPGFTGNYCQ. Residues 1020–1056 enclose the EGF-like 27; calcium-binding domain; the sequence is DINECDSKPCLNGGTCQDSYGAYKCTCPQGYTGLNCQ. EGF-like domains follow at residues 1058 to 1094 and 1096 to 1142; these read LVRW…VYCD and PSVS…SYCE. Residues 1144–1180 enclose the EGF-like 30; calcium-binding domain; that stretch reads QVDECSPNPCQNGATCTDYLGGYSCECVAGYHGVNCS. A glycan (N-linked (GlcNAc...) asparagine) is linked at Asn1178. The 37-residue stretch at 1182-1218 folds into the EGF-like 31; calcium-binding domain; it reads EINECLSHPCHNGGTCIDLINTYKCSCPRGTQGVHCE. One can recognise an EGF-like 32; calcium-binding domain in the interval 1220–1264; sequence NVDDCTPFYDSVSLEPKCFNNGKCFDRVGGYNCICPPGFVGERCE. EGF-like domains lie at 1266-1304, 1306-1345, 1347-1383, and 1386-1424; these read DVNE…RRCD, VVDG…ATCE, DART…ATCQ, and VVSP…LFCH. Residue Thr1400 is glycosylated (O-linked (Fuc...) threonine; alternate). O-linked (GalNAc...) threonine; alternate glycosylation occurs at Thr1400. LNR repeat units lie at residues 1447–1487, 1488–1529, and 1530–1564; these read CENE…PWKN, CTQS…CNPL, and YDQY…NMPE. The Ca(2+) site is built by Asn1458, Asp1473, and Asp1476. Asn1487 carries N-linked (GlcNAc...) asparagine glycosylation. 5 disulfides stabilise this stretch: Cys1488–Cys1512, Cys1494–Cys1507, Cys1503–Cys1519, Cys1534–Cys1547, and Cys1543–Cys1559. Asp1500 is a binding site for Ca(2+). Asn1508 is a glycosylation site (N-linked (GlcNAc...) asparagine). Ca(2+) contacts are provided by Asp1515, Asp1518, Asp1540, Asp1555, and Asp1558. Asn1584 is a glycosylation site (N-linked (GlcNAc...) asparagine). Residues 1731-1751 traverse the membrane as a helical segment; that stretch reads AMFSMLVIPLLIIFVIMVVIV. At 1752–2522 the chain is on the cytoplasmic side; it reads NKKRRREHGQ…QRTHIPEAFK (771 aa). 6 ANK repeats span residues 1877–1920, 1925–1954, 1958–1988, 1992–2021, 2025–2054, and 2058–2087; these read DGFT…QLHN, TGET…DANV, MGRT…DLDA, DGTT…DVNA, FGKS…NKDM, and KEET…NRDI. 3 disordered regions span residues 2146 to 2229, 2365 to 2404, and 2449 to 2522; these read MKPS…MPLN, LMQA…PFCS, and LTPP…EAFK. Over residues 2184–2200 the composition is skewed to low complexity; sequence SLLDSGSSGVLSPVDSL. Residues 2218-2229 show a composition bias toward polar residues; sequence SPFQQSPSMPLN. Over residues 2365–2390 the composition is skewed to low complexity; sequence LMQAQQMQQQQNLQLHQSVQQQQHQN. Polar residues-rich tracts occupy residues 2391–2404 and 2449–2469; these read SNAT…PFCS and LTPP…SHQL. The segment covering 2479-2494 has biased composition (low complexity); sequence PSPESPDQWSSSSPHS. The segment covering 2495-2514 has biased composition (polar residues); the sequence is NMSDWSEGISSPPTSMQPQR.

This sequence belongs to the NOTCH family. In terms of processing, O-glycosylated on the EGF-like domains. Contains both O-linked fucose and O-linked glucose. O-linked glycosylation by galnt11 is involved in determination of left/right symmetry: glycosylation promotes activation of notch1, possibly by promoting cleavage by adam17, modulating the balance between motile and immotile (sensory) cilia at the left-right organiser (LRO). Synthesized in the endoplasmic reticulum as an inactive form which is proteolytically cleaved by a furin-like convertase in the trans-Golgi network before it reaches the plasma membrane to yield an active, ligand-accessible form. Cleavage results in a C-terminal fragment N(TM) and a N-terminal fragment N(EC). Following ligand binding, it is cleaved by adam17 to yield a membrane-associated intermediate fragment called notch extracellular truncation (NEXT). Following endocytosis, this fragment is then cleaved by presenilin dependent gamma-secretase to release a Notch-derived peptide containing the intracellular domain (NICD) from the membrane.

The protein resides in the cell membrane. It is found in the nucleus. Functions as a receptor for membrane-bound ligands Jagged-1 (JAG1), Jagged-2 (JAG2) and Delta-1 (DLL1) to regulate cell-fate determination. Upon ligand activation through the released notch intracellular domain (NICD) it forms a transcriptional activator complex with RBPJ/RBPSUH and activates genes of the enhancer of split locus. Affects the implementation of differentiation, proliferation and apoptotic programs. Involved in angiogenesis; negatively regulates endothelial cell proliferation and migration and angiogenic sprouting. Involved in the maturation of both CD4(+) and CD8(+) cells in the thymus. Important for follicular differentiation and possibly cell fate selection within the follicle. During cerebellar development, functions as a receptor for neuronal DNER and is involved in the differentiation of Bergmann glia. Represses neuronal and myogenic differentiation. May play an essential role in postimplantation development, probably in some aspect of cell specification and/or differentiation. May be involved in mesoderm development, somite formation and neurogenesis. Involved in determination of left/right symmetry by modulating the balance between motile and immotile (sensory) cilia at the left-right organiser (LRO). The sequence is that of Neurogenic locus notch homolog protein 1 (notch1) from Xenopus tropicalis (Western clawed frog).